The following is a 251-amino-acid chain: Probable transcriptional regulatory protein Cpar_0525 (251 aa).

Belongs to the TACO1 family.

The protein localises to the cytoplasm. The protein is Probable transcriptional regulatory protein Cpar_0525 of Chlorobaculum parvum (strain DSM 263 / NCIMB 8327) (Chlorobium vibrioforme subsp. thiosulfatophilum).